The sequence spans 291 residues: Probable 2-(5''-triphosphoribosyl)-3'-dephosphocoenzyme-A synthase (291 aa).

The protein belongs to the CitG/MdcB family.

The enzyme catalyses 3'-dephospho-CoA + ATP = 2'-(5''-triphospho-alpha-D-ribosyl)-3'-dephospho-CoA + adenine. Functionally, involved in the formation of 2-(5''-phosphoribosyl)-3'-dephosphocoenzyme-A, the prosthetic group of the acyl-carrier protein of the malonate decarboxylase. In Pseudomonas syringae pv. syringae (strain B728a), this protein is Probable 2-(5''-triphosphoribosyl)-3'-dephosphocoenzyme-A synthase.